A 438-amino-acid chain; its full sequence is MQRNRRIEYLEDGRCRMTWNDVSARQVLRRIFDAAVASADPKIAVVNNLPERPRGRCVVVGAGKASAAMAAAVDAAWPDVDLSGIVVTRYGHAVPAGRIEILEASHPVPDEMSIKAAEKIFAAVQGLGPDDLVVALISGGGSSLLVSPTGKMTLTDKRAVNQALLASGATISEMNTVRKHLSAIKGGHLARAALPAKLVTLIISDVPGDDPSEIASGPTVADPTTLADAAAIIARYGIDLPESARAVLVQGNETPKAGEVAGEIRLVAAPSIALEAAAAAALDAGLCPLILGDALEGEAREMGRVMAGIALSARDKGLPVAAPAVILSGGESTVSLGAMTEGRGGRNTEFLLSLAVALKGASGIWAIAGDTDGIDGVEDAAGALVAPDSLIRMRDAGIDPRATLSAHDSYTAFKAIGDLVVTGPTLTNVNDIRAILIG.

The catalysed reaction is (R)-glycerate + NAD(+) = 3-hydroxypyruvate + NADH + H(+). It carries out the reaction (R)-glycerate + NADP(+) = 3-hydroxypyruvate + NADPH + H(+). It functions in the pathway carbohydrate acid metabolism; tartrate degradation; 3-hydroxypyruvate from D-glycerate: step 1/1. In terms of biological role, degrades an unidentified toxic product from the first step of tartrate degradation. In Agrobacterium vitis (Rhizobium vitis), this protein is Putative hydroxypyruvate reductase (ttuD).